We begin with the raw amino-acid sequence, 333 residues long: Adenosine deaminase (333 aa).

Residues histidine 12 and histidine 14 each coordinate Zn(2+). The substrate site is built by histidine 14, aspartate 16, and glycine 170. Residue histidine 197 coordinates Zn(2+). Glutamate 200 (proton donor) is an active-site residue. Aspartate 278 is a Zn(2+) binding site. Substrate is bound at residue aspartate 279.

The protein belongs to the metallo-dependent hydrolases superfamily. Adenosine and AMP deaminases family. Adenosine deaminase subfamily. The cofactor is Zn(2+).

It catalyses the reaction adenosine + H2O + H(+) = inosine + NH4(+). The enzyme catalyses 2'-deoxyadenosine + H2O + H(+) = 2'-deoxyinosine + NH4(+). Functionally, catalyzes the hydrolytic deamination of adenosine and 2-deoxyadenosine. This chain is Adenosine deaminase, found in Shigella sonnei (strain Ss046).